A 90-amino-acid chain; its full sequence is Large ribosomal subunit protein uL23c (90 aa).

Belongs to the universal ribosomal protein uL23 family. In terms of assembly, part of the 50S ribosomal subunit.

Its subcellular location is the plastid. It localises to the chloroplast. Its function is as follows. Binds to 23S rRNA. The sequence is that of Large ribosomal subunit protein uL23c (rpl23) from Oltmannsiellopsis viridis (Marine flagellate).